The primary structure comprises 383 residues: Cytochrome b (383 aa).

4 helical membrane passes run 31–51, 75–97, 112–132, and 178–198; these read FGSL…FLAM, WLMR…VHIF, LWCS…MGYV, and FFSL…IHLI. Positions 81 and 95 each coordinate heme b. Residues His-182 and His-196 each coordinate heme b. His-201 serves as a coordination point for a ubiquinone. The next 4 membrane-spanning stretches (helical) occupy residues 224–244, 288–308, 320–340, and 347–367; these read FYTK…IFIF, IGGV…PFTN, IFKV…WVGQ, and YTEI…IIIP.

It belongs to the cytochrome b family. Fungal cytochrome b-c1 complex contains 10 subunits; 3 respiratory subunits, 2 core proteins and 5 low-molecular weight proteins. Cytochrome b-c1 complex is a homodimer. The cofactor is heme b.

It is found in the mitochondrion inner membrane. In terms of biological role, component of the ubiquinol-cytochrome c reductase complex (complex III or cytochrome b-c1 complex) that is part of the mitochondrial respiratory chain. The b-c1 complex mediates electron transfer from ubiquinol to cytochrome c. Contributes to the generation of a proton gradient across the mitochondrial membrane that is then used for ATP synthesis. The protein is Cytochrome b (cob) of Phytophthora megasperma (Potato pink rot fungus).